Reading from the N-terminus, the 701-residue chain is Polyribonucleotide nucleotidyltransferase (701 aa).

2 residues coordinate Mg(2+): D487 and D493. A KH domain is found at 554–613 (PTMLQMKIDSDKIRDVIGKGGATIRGICEETKASIDIEDDGSVKIYGETKEAAEAAKLRV). Residues 623–691 (GKIYVGKVER…NRGRIKLSIK (69 aa)) form the S1 motif domain.

This sequence belongs to the polyribonucleotide nucleotidyltransferase family. Component of the RNA degradosome, which is a multiprotein complex involved in RNA processing and mRNA degradation. It depends on Mg(2+) as a cofactor.

The protein localises to the cytoplasm. The enzyme catalyses RNA(n+1) + phosphate = RNA(n) + a ribonucleoside 5'-diphosphate. Functionally, involved in mRNA degradation. Catalyzes the phosphorolysis of single-stranded polyribonucleotides processively in the 3'- to 5'-direction. This is Polyribonucleotide nucleotidyltransferase from Pseudomonas aeruginosa (strain LESB58).